The sequence spans 556 residues: 2-succinyl-5-enolpyruvyl-6-hydroxy-3-cyclohexene-1-carboxylate synthase (556 aa).

This sequence belongs to the TPP enzyme family. MenD subfamily. As to quaternary structure, homodimer. It depends on Mg(2+) as a cofactor. Mn(2+) serves as cofactor. Thiamine diphosphate is required as a cofactor.

It carries out the reaction isochorismate + 2-oxoglutarate + H(+) = 5-enolpyruvoyl-6-hydroxy-2-succinyl-cyclohex-3-ene-1-carboxylate + CO2. It functions in the pathway quinol/quinone metabolism; 1,4-dihydroxy-2-naphthoate biosynthesis; 1,4-dihydroxy-2-naphthoate from chorismate: step 2/7. Its pathway is quinol/quinone metabolism; menaquinone biosynthesis. Its function is as follows. Catalyzes the thiamine diphosphate-dependent decarboxylation of 2-oxoglutarate and the subsequent addition of the resulting succinic semialdehyde-thiamine pyrophosphate anion to isochorismate to yield 2-succinyl-5-enolpyruvyl-6-hydroxy-3-cyclohexene-1-carboxylate (SEPHCHC). The sequence is that of 2-succinyl-5-enolpyruvyl-6-hydroxy-3-cyclohexene-1-carboxylate synthase from Enterobacter sp. (strain 638).